We begin with the raw amino-acid sequence, 143 residues long: Large ribosomal subunit protein uL13 (143 aa).

The protein belongs to the universal ribosomal protein uL13 family. As to quaternary structure, part of the 50S ribosomal subunit.

In terms of biological role, this protein is one of the early assembly proteins of the 50S ribosomal subunit, although it is not seen to bind rRNA by itself. It is important during the early stages of 50S assembly. The sequence is that of Large ribosomal subunit protein uL13 from Prochlorococcus marinus (strain MIT 9301).